An 856-amino-acid polypeptide reads, in one-letter code: Beta-galactosidase 3 (856 aa).

The first 31 residues, 1 to 31 (MREMGTGDSASRLILWFCLGFLILGVGFVQC), serve as a signal peptide directing secretion. Glu189 (proton donor) is an active-site residue. Catalysis depends on Glu258, which acts as the Nucleophile. N-linked (GlcNAc...) asparagine glycosylation is present at Asn468. Positions 760-846 (TFHRPKVHLK…KRLTVEAVCA (87 aa)) constitute an SUEL-type lectin domain.

The protein belongs to the glycosyl hydrolase 35 family. In terms of tissue distribution, ubiquitous.

The protein localises to the secreted. Its subcellular location is the extracellular space. It is found in the apoplast. It carries out the reaction Hydrolysis of terminal non-reducing beta-D-galactose residues in beta-D-galactosides.. The protein is Beta-galactosidase 3 (BGAL3) of Arabidopsis thaliana (Mouse-ear cress).